The following is a 1583-amino-acid chain: Protein mesh (1583 aa).

The first 21 residues, 1–21, serve as a signal peptide directing secretion; it reads MGVKIKLVLAVVLILSANVLG. Over 22–1182 the chain is Extracellular; the sequence is QDEIVNDTES…EFSQRALFLT (1161 aa). The NIDO domain occupies 260 to 415; it reads GIYFRLDRDL…GRHIFRIDEN (156 aa). An AMOP domain is found at 647–798; the sequence is GQRWSNSMCN…VGCETFRFER (152 aa). The region spanning 811 to 1019 is the VWFD domain; sequence GVAGIFGDPH…HWQLTDREQR (209 aa). The 61-residue stretch at 1110 to 1170 folds into the Sushi domain; that stretch reads ISCGILETPR…PDYGYTECLR (61 aa). 2 disulfide bridges follow: Cys1112–Cys1152 and Cys1138–Cys1168. A helical membrane pass occupies residues 1183 to 1203; that stretch reads WGVIVAVILPLGLLICLLWFW. The Cytoplasmic segment spans residues 1204–1472; sequence CWHKPRSEGK…QEYSSRTLGA (269 aa). A compositionally biased stretch (polar residues) spans 1232–1250; sequence LRSSSMGNITDTMKSSTIP. Residues 1232–1448 form a disordered region; sequence LRSSSMGNIT…IPEAPKSAPV (217 aa). The span at 1291 to 1300 shows a compositional bias: basic and acidic residues; that stretch reads GKSDSGKSDK. Residues 1405-1416 show a composition bias toward polar residues; it reads PIPSQYSPTYSE. A helical transmembrane segment spans residues 1473–1493; sequence TWGIISAVMLPIIIILICVAW. At 1494–1583 the chain is on the extracellular side; that stretch reads RILQRRKAEE…RQWGGETEIN (90 aa). Positions 1521–1539 are enriched in basic and acidic residues; the sequence is DSVKVTSDDESIPYKKDVT. The segment at 1521 to 1583 is disordered; it reads DSVKVTSDDE…RQWGGETEIN (63 aa).

In fifth instar larvae, expressed in midgut epithelial cells (at protein level).

Its subcellular location is the membrane. It is found in the cell junction. The protein localises to the septate junction. It localises to the lateral cell membrane. Functionally, may be required for the proper organization of smooth septate junctions and for the barrier function of the midgut epithelium. This is Protein mesh from Bombyx mori (Silk moth).